Consider the following 281-residue polypeptide: Phosphate import ATP-binding protein PstB (281 aa).

The 244-residue stretch at 33–276 (FKIENLSLWY…PQLKRTRDYI (244 aa)) folds into the ABC transporter domain. ATP is bound at residue 67-74 (GPSGCGKS).

It belongs to the ABC transporter superfamily. Phosphate importer (TC 3.A.1.7) family. As to quaternary structure, the complex is composed of two ATP-binding proteins (PstB), two transmembrane proteins (PstC and PstA) and a solute-binding protein (PstS).

The protein resides in the cell membrane. The catalysed reaction is phosphate(out) + ATP + H2O = ADP + 2 phosphate(in) + H(+). Part of the ABC transporter complex PstSACB involved in phosphate import. Responsible for energy coupling to the transport system. This chain is Phosphate import ATP-binding protein PstB, found in Mycoplasma mobile (strain ATCC 43663 / 163K / NCTC 11711) (Mesomycoplasma mobile).